Reading from the N-terminus, the 216-residue chain is Adenylate kinase (216 aa).

Residue 10 to 15 (GAGKGT) coordinates ATP. The segment at 30–59 (STGDMFRAAMKAETELGLQAKSFIDKGALV) is NMP. Residues Thr-31, Arg-36, 57-59 (ALV), 85-88 (GFPR), and Gln-92 each bind AMP. The tract at residues 126 to 163 (GRRICKECGATYHLEFNPPAKADVCDKCGGELYQRSDD) is LID. Arg-127 contacts ATP. The Zn(2+) site is built by Cys-130 and Cys-133. 136 to 137 (TY) contributes to the ATP binding site. Cys-150 and Cys-153 together coordinate Zn(2+). Residues Arg-160 and Arg-171 each coordinate AMP. Gln-199 lines the ATP pocket.

This sequence belongs to the adenylate kinase family. In terms of assembly, monomer.

It is found in the cytoplasm. It carries out the reaction AMP + ATP = 2 ADP. Its pathway is purine metabolism; AMP biosynthesis via salvage pathway; AMP from ADP: step 1/1. In terms of biological role, catalyzes the reversible transfer of the terminal phosphate group between ATP and AMP. Plays an important role in cellular energy homeostasis and in adenine nucleotide metabolism. This chain is Adenylate kinase, found in Bacillus mycoides (strain KBAB4) (Bacillus weihenstephanensis).